We begin with the raw amino-acid sequence, 208 residues long: Orotidine 5'-phosphate decarboxylase (208 aa).

Substrate contacts are provided by residues Asp-7, Lys-29, 57-66, Ser-109, 162-172, Gly-185, and Arg-186; these read DLKLADIPNT and PGIGAQGGKAK. The active-site Proton donor is the Lys-59.

Belongs to the OMP decarboxylase family. Type 1 subfamily. As to quaternary structure, homodimer.

It catalyses the reaction orotidine 5'-phosphate + H(+) = UMP + CO2. Its pathway is pyrimidine metabolism; UMP biosynthesis via de novo pathway; UMP from orotate: step 2/2. Its function is as follows. Catalyzes the decarboxylation of orotidine 5'-monophosphate (OMP) to uridine 5'-monophosphate (UMP). This Pyrococcus abyssi (strain GE5 / Orsay) protein is Orotidine 5'-phosphate decarboxylase.